A 189-amino-acid chain; its full sequence is High affinity copper uptake protein 1 (189 aa).

Topologically, residues M1–E67 are extracellular. The short motif at M13–M18 is the Methionine segments (Mets) motif element. Positions M15 to S36 are disordered. Positions H20–S36 are enriched in low complexity. Residues M68–A88 traverse the membrane as a helical segment. The Cytoplasmic portion of the chain corresponds to R89–H131. At T113 the chain carries Phosphothreonine. A helical membrane pass occupies residues L132–F152. Residues M153–Y155 lie on the Extracellular side of the membrane. A helical membrane pass occupies residues N156–W176. The Cytoplasmic segment spans residues K177 to H189. Position 188 is a cysteine sulfenic acid (-SOH) (C188).

It belongs to the copper transporter (Ctr) (TC 1.A.56) family. SLC31A subfamily. As to quaternary structure, homotrimer; is stabilized by cisplatin via interactions between cisplatin and the methionine-rich clusters, and could be crucial for the copper(2+) reduction process and copper(1+) stabilization. Heterotrimer between SLC31A1, CCS and SOD1; this heterotrimer is copper(1+)-mediated and its maintenance is regulated through SOD1 activation. Interacts with KDR; this interaction is induced upon VEGFA stimulation leading to SLC31A1 and KDR subsequent co-internalization to early endosomes, thereby activating KDR downstream signaling in endothelial cells. Interacts (via C-terminal domain) with ATOX1 (via dimer form); this interaction improves ATOX1 stability and controls intracellular copper(1+) levels. Interacts with SLC31A2; this interaction stabilizes SLC31A2 and protects its from ubiquitination and degradation. Interacts (via C-terminal domain) with CCS; this interaction is copper(1+)-mediated. In terms of processing, proteolytic cleavage, leading to a truncated form, is facilitated by SLC31A2 and initiated preferentially by CTSL and to a minor extend by CTSB in endolysosomal compartments. A post-CTSL/cathepsin L processing occurs to yield to the fully truncated form. Sulfenylated at Cys-188 after stimulation with VEGFA, which induces SLC31A1-KDR disulfide bond formation and their co-internalization to early endosomes, driving to a sustained VEGFR2 signaling.

It localises to the cell membrane. The protein localises to the early endosome membrane. Its subcellular location is the recycling endosome membrane. The protein resides in the apical cell membrane. It is found in the late endosome membrane. It localises to the basolateral cell membrane. It carries out the reaction Ag(+)(out) = Ag(+)(in). It catalyses the reaction Cu(+)(out) = Cu(+)(in). Its function is as follows. Uniporter that mediates the transport of copper(1+) from the extracellular space to the cytoplasm, across the plasma membrane and delivers directly copper(1+) to specific chaperone such as ATOX1, via a copper(1+)- mediated transient interaction between the C-terminal domain and a copper(1+) chaperone, thus controlling intracellular copper(1+) levels. May function in copper(1+) import from the apical membrane thus may drive intestinal copper absorption. The copper(1+) transport mechanism is sodium-independent, saturable and of high-affinity. Also mediates the uptake of silver(1+). May function in the influx of the platinum-containing chemotherapeutic agents. The platinum-containing chemotherapeutic agents uptake is saturable. In vitro, mediates the transport of cadmium(2+) into cells. Also participates in the first step of copper(2+) acquisition by cells through a direct transfer of copper(2+) from copper(2+) carriers in blood, such as ALB to the N-terminal domain of SLC31A1, leading to copper(2+) reduction and probably followed by copper(1+) stabilization. In addition, functions as a redox sensor to promote angiogenesis in endothelial cells, in a copper(1+) transport independent manner, by transmitting the VEGF-induced ROS signal through a sulfenylation at Cys-189 leadin g to a subsequent disulfide bond formation between SLC31A1 and KDR. The SLC31A1-KDR complex is then co-internalized to early endosomes, driving a sustained VEGFR2 signaling. Functionally, mobilizes copper(1+) out of the endosomal compartment, making copper(1+) available for export out of the cells. The polypeptide is High affinity copper uptake protein 1 (Sus scrofa (Pig)).